Consider the following 249-residue polypeptide: tRNA (guanine-N(1)-)-methyltransferase (249 aa).

S-adenosyl-L-methionine is bound by residues Gly113 and 133–138 (IGDYVL).

It belongs to the RNA methyltransferase TrmD family. Homodimer.

It is found in the cytoplasm. It carries out the reaction guanosine(37) in tRNA + S-adenosyl-L-methionine = N(1)-methylguanosine(37) in tRNA + S-adenosyl-L-homocysteine + H(+). Functionally, specifically methylates guanosine-37 in various tRNAs. This chain is tRNA (guanine-N(1)-)-methyltransferase, found in Aeromonas salmonicida (strain A449).